A 467-amino-acid polypeptide reads, in one-letter code: uncharacterized protein (467 aa).

At lysine 290 the chain carries N6-(pyridoxal phosphate)lysine.

This sequence belongs to the class-III pyridoxal-phosphate-dependent aminotransferase family. The cofactor is pyridoxal 5'-phosphate.

This is an uncharacterized protein from Sinorhizobium fredii (strain NBRC 101917 / NGR234).